A 675-amino-acid chain; its full sequence is Methionine--tRNA ligase (675 aa).

Positions 15-25 (PYANGSIHLGH) match the 'HIGH' region motif. Residues Cys146, Cys149, Cys159, and Cys162 each contribute to the Zn(2+) site. The short motif at 332–336 (KMSKS) is the 'KMSKS' region element. Lys335 is a binding site for ATP. The region spanning 573 to 675 (DFAKVDMRIA…SGAQPGMQVK (103 aa)) is the tRNA-binding domain.

This sequence belongs to the class-I aminoacyl-tRNA synthetase family. MetG type 1 subfamily. In terms of assembly, homodimer. It depends on Zn(2+) as a cofactor.

It is found in the cytoplasm. It catalyses the reaction tRNA(Met) + L-methionine + ATP = L-methionyl-tRNA(Met) + AMP + diphosphate. In terms of biological role, is required not only for elongation of protein synthesis but also for the initiation of all mRNA translation through initiator tRNA(fMet) aminoacylation. The chain is Methionine--tRNA ligase from Yersinia pseudotuberculosis serotype O:3 (strain YPIII).